A 930-amino-acid polypeptide reads, in one-letter code: Translation initiation factor IF-2 (930 aa).

Residues 50–67 show a composition bias toward low complexity; that stretch reads FKPAAAPKVEAKPAAPKV. 2 disordered regions span residues 50-217 and 260-346; these read FKPA…SSEE and EVVP…HELP. 2 stretches are compositionally biased toward basic and acidic residues: residues 68 to 90 and 110 to 125; these read SAEK…EAKP and FKAE…AERR. Positions 129–141 are enriched in low complexity; sequence KGNNRDQQQNGNR. 2 stretches are compositionally biased toward basic and acidic residues: residues 157 to 167 and 262 to 295; these read RDNRRFNDQAK and VPEK…DGPR. A compositionally biased stretch (low complexity) spans 309-318; that stretch reads NQKNSNWNNN. A compositionally biased stretch (basic and acidic residues) spans 337-346; the sequence is VTERKFHELP. The tr-type G domain occupies 432 to 599; the sequence is ERPPVVTIMG…TVLLVAEIQE (168 aa). The G1 stretch occupies residues 441–448; that stretch reads GHVDHGKT. 441 to 448 is a binding site for GTP; it reads GHVDHGKT. The tract at residues 466-470 is G2; sequence GITQH. The segment at 487-490 is G3; sequence DTPG. GTP is bound by residues 487 to 491 and 541 to 544; these read DTPGH and NKID. Residues 541-544 form a G4 region; sequence NKID. Residues 577-579 form a G5 region; it reads SAK.

The protein belongs to the TRAFAC class translation factor GTPase superfamily. Classic translation factor GTPase family. IF-2 subfamily.

It localises to the cytoplasm. Functionally, one of the essential components for the initiation of protein synthesis. Protects formylmethionyl-tRNA from spontaneous hydrolysis and promotes its binding to the 30S ribosomal subunits. Also involved in the hydrolysis of GTP during the formation of the 70S ribosomal complex. The sequence is that of Translation initiation factor IF-2 from Streptococcus pneumoniae (strain ATCC 700669 / Spain 23F-1).